A 369-amino-acid polypeptide reads, in one-letter code: Translocating chain-associated membrane protein 1-like 1 (369 aa).

Residues 1–29 (MGLRKKSTKNPPVLSQEFILQNHADIVSC) are Cytoplasmic-facing. A helical membrane pass occupies residues 30 to 50 (VGMFFLLGLVFEGTAEASIVF). Residues 51–81 (LTLQHSVAVPAAEEQATGSKSLYYYGVKDLA) are Lumenal-facing. A helical transmembrane segment spans residues 82-102 (TVFFYMLVAIIIHATIQEYVL). Residues 103–121 (DKINKRMQFTKAKQNKFNE) lie on the Cytoplasmic side of the membrane. One can recognise a TLC domain in the interval 117–326 (NKFNESGQFS…TLWLQRWVED (210 aa)). The helical transmembrane segment at 122 to 142 (SGQFSVFYFFSCIWGTFILIS) threads the bilayer. Residues 143–164 (ENCLSDPTLIWKARPHSMMTFQ) lie on the Lumenal side of the membrane. Residues 165–185 (MKFFYISQLAYWFHAFPELYF) traverse the membrane as a helical segment. At 186–196 (QKTKKQDIPRQ) the chain is on the cytoplasmic side. A helical transmembrane segment spans residues 197–215 (LVYIGLHLFHITGAYLLYL). Over 216–219 (NHLG) the chain is Lumenal. Residues 220–242 (LLLLVLHYFVELLSHMCGLFYFS) traverse the membrane as a helical segment. Residues 243-249 (DEKYQKG) are Cytoplasmic-facing. A helical membrane pass occupies residues 250-270 (ISLWAIVFILGRLVTLIVSVL). At 271–297 (TVGFHLAGSQNRNPDALTGNVNVLAAK) the chain is on the lumenal side. A helical transmembrane segment spans residues 298–318 (IAVLSSSCTIQAYVTWNLITL). Residues 319–369 (WLQRWVEDSNIQASCMKKKRSRSSKKRTENGVGVETSNRVDCPPKRKEKSS) lie on the Cytoplasmic side of the membrane. The disordered stretch occupies residues 335–369 (KKKRSRSSKKRTENGVGVETSNRVDCPPKRKEKSS). Over residues 360–369 (CPPKRKEKSS) the composition is skewed to basic and acidic residues.

The protein belongs to the TRAM family.

It is found in the endoplasmic reticulum membrane. In terms of biological role, stimulatory or required for the translocation of secretory proteins across the ER membrane. In Homo sapiens (Human), this protein is Translocating chain-associated membrane protein 1-like 1 (TRAM1L1).